A 221-amino-acid polypeptide reads, in one-letter code: Peroxiredoxin 2 (221 aa).

A Thioredoxin domain is found at 15-170 (PQIGAPAPDF…IIRIIDALQT (156 aa)). Residue cysteine 56 is the Cysteine sulfenic acid (-SOH) intermediate of the active site. A substrate-binding site is contributed by arginine 133. A disulfide bond links cysteine 211 and cysteine 217.

This sequence belongs to the peroxiredoxin family. Prx6 subfamily. As to quaternary structure, homodecamer. Pentamer of dimers that assemble into a ring structure.

The protein localises to the cytoplasm. The catalysed reaction is a hydroperoxide + [thioredoxin]-dithiol = an alcohol + [thioredoxin]-disulfide + H2O. In terms of biological role, thiol-specific peroxidase that catalyzes the reduction of hydrogen peroxide and organic hydroperoxides to water and alcohols, respectively. Plays a role in cell protection against oxidative stress by detoxifying peroxides. This Caldanaerobacter subterraneus subsp. tengcongensis (strain DSM 15242 / JCM 11007 / NBRC 100824 / MB4) (Thermoanaerobacter tengcongensis) protein is Peroxiredoxin 2.